The sequence spans 171 residues: Adenine phosphoribosyltransferase (171 aa).

Belongs to the purine/pyrimidine phosphoribosyltransferase family. Homodimer.

Its subcellular location is the cytoplasm. It catalyses the reaction AMP + diphosphate = 5-phospho-alpha-D-ribose 1-diphosphate + adenine. It functions in the pathway purine metabolism; AMP biosynthesis via salvage pathway; AMP from adenine: step 1/1. Functionally, catalyzes a salvage reaction resulting in the formation of AMP, that is energically less costly than de novo synthesis. The polypeptide is Adenine phosphoribosyltransferase (Gloeobacter violaceus (strain ATCC 29082 / PCC 7421)).